A 144-amino-acid polypeptide reads, in one-letter code: MRLLALFAFAVAVVSAQRNQMCQQPRTQGSCDASNQITKFFYTGSGCTSAPVCSDTDGGYGTEDECIQACTVQGGHHNEGAGEEGCSGDPPRGDCGGQVEERYYFDSTTRTCQTFEYRGCSSGNPDNSYETEIECEIACPSASS.

Positions 1–16 are cleaved as a signal peptide; that stretch reads MRLLALFAFAVAVVSA. The residue at position 17 (Gln-17) is a Pyrrolidone carboxylic acid. In terms of domain architecture, BPTI/Kunitz inhibitor 1 spans 18–73; sequence RNQMCQQPRTQGSCDASNQITKFFYTGSGCTSAPVCSDTDGGYGTEDECIQACTVQ. Intrachain disulfides connect Cys-22/Cys-70, Cys-31/Cys-53, and Cys-47/Cys-66. The segment at 74-85 is linker; it reads GGHHNEGAGEEG. The BPTI/Kunitz inhibitor domain occupies 86 to 139; the sequence is CSGDPPRGDCGGQVEERYYFDSTTRTCQTFEYRGCSSGNPDNSYETEIECEIAC. 3 disulfides stabilise this stretch: Cys-86-Cys-139, Cys-95-Cys-120, and Cys-112-Cys-135. The short motif at 92 to 94 is the Cell attachment site element; it reads RGD.

In terms of processing, the N-terminus is blocked. In terms of tissue distribution, expressed in salivary glands.

It is found in the cytoplasmic vesicle. It localises to the secretory vesicle. The protein resides in the secreted. Functionally, tick salivary thrombin inhibitor that plays an important part in the anti-hemostatic strategy of ticks. This is Monobin from Argas monolakensis (Mono lake bird tick).